Reading from the N-terminus, the 506-residue chain is Protein EFFECTOR OF TRANSCRIPTION 1 (506 aa).

Residues 185-225 (AFQGLYELSHDHGRKDDVLVANLGQPESIRSRLRSYSRSFA) enclose the GIY-YIG domain. Over residues 234 to 247 (LSQTILPTTQNKSD) the composition is skewed to polar residues. A disordered region spans residues 234-298 (LSQTILPTTQ…VSEKHDDIVD (65 aa)). Residues 248–272 (NQTEEKKSDSEEEREVSSDAAEKES) show a composition bias toward basic and acidic residues. Over residues 273-288 (NSLPSILRLSRSRPQP) the composition is skewed to low complexity. Cx9Cx9RCx2HK repeat units follow at residues 306-331 (CGVLLEDGTTCTTTPVKGRKRCTEHK) and 361-386 (CGVILPDMIRCRSKPVSRRKRCEDHK). A compositionally biased stretch (basic and acidic residues) spans 404-413 (KAVNEDKSKP). Residues 404–426 (KAVNEDKSKPETSTGMNQEGSGL) are disordered. Positions 414-423 (ETSTGMNQEG) are enriched in polar residues. 2 Cx9Cx9RCx2HK repeats span residues 428–453 (CEATTKNGLPCTRSAPEGSKRCWQHK) and 475–500 (CGFKLYNGSVCEKSPVKGRKRCEEHK).

In terms of tissue distribution, expressed in rosette leaves, stipules, stems, flowers, siliques and mature seeds. Expressed in the vascular bundles of xylem in shoot parenchyma cells. Expressed in the remnant cytoplasm of differentiated fiber cells and in protoxylem element of parenchymal cells.

The protein localises to the cytoplasm. Its subcellular location is the nucleus. In terms of biological role, transcriptional regulator involved in the regulation of cell differentiation in meristems. Binds DNA without sequence preference. The protein is Protein EFFECTOR OF TRANSCRIPTION 1 of Arabidopsis thaliana (Mouse-ear cress).